The chain runs to 269 residues: Myelin protein zero-like protein 1 (269 aa).

The N-terminal stretch at 1–35 (MAASAGAGAVIAAPDSRRWLWSVLAAALGLLTAGV) is a signal peptide. Positions 36-146 (SALEVYTPKE…VKNPPDIVVQ (111 aa)) constitute an Ig-like V-type domain. At 36 to 162 (SALEVYTPKE…YVVEKENLPV (127 aa)) the chain is on the extracellular side. N-linked (GlcNAc...) asparagine glycosylation is found at Asn50 and Asn130. Cys58 and Cys135 are oxidised to a cystine. The helical transmembrane segment at 163-183 (FPVWVVVGIVTAVVLGLTLLI) threads the bilayer. Over 184–269 (SMILAVLYRR…SVVYADIRKN (86 aa)) the chain is Cytoplasmic. Residues 199-238 (DYTGCSTSESLSPVKQAPRKSPSDTEGLVKSLPSGSHQGP) are disordered. Residues 202–211 (GCSTSESLSP) show a composition bias toward polar residues. Phosphoserine is present on residues Ser204, Ser206, Ser208, Ser210, Ser219, and Ser221. The ITIM motif 1 signature appears at 239–244 (VIYAQL). The residue at position 241 (Tyr241) is a Phosphotyrosine. Position 260 is a phosphoserine (Ser260). The ITIM motif 2 signature appears at 261 to 266 (VVYADI). A Phosphotyrosine modification is found at Tyr263.

Belongs to the myelin P0 protein family. Interacts with phosphorylated PTPN11/SHP-2. In terms of processing, phosphorylated on tyrosine residues upon stimulation with pervanadate and concanavalin-A (ConA). Phosphorylation at Tyr-241 and Tyr-263 is required for interaction with PTPN11/SHP-2. Dephosphorylated by PTPN11/SHP-2 (in vitro). N-glycosylated. N-glycosylation is required for concanavalin A binding. Widely expressed with highest levels in heart, placenta, kidney and pancreas. Isoform 3 is relatively abundant in hematopoietic tissues and fetal liver. Isoform 1 and isoform 3 are expressed in CD14- PB monocytes and pre-B cell progenitors. Isoform 3 appears to be the major isoform in CD34- promyelocytic and promonocytic cells. During differentiation in monocytic cells, the expression level of isoform 3 decreases and that of isoform 1 increases. Isoform 1 is prominent in stromal cells and, to a lesser extent, in umbilical vein endothelial cells and erythroid progenitors. Isoform 2 is expressed in a erythroid progenitor cell line.

The protein localises to the membrane. In terms of biological role, cell surface receptor, which is involved in signal transduction processes. Recruits PTPN11/SHP-2 to the cell membrane and is a putative substrate of PTPN11/SHP-2. Is a major receptor for concanavalin-A (ConA) and is involved in cellular signaling induced by ConA, which probably includes Src family tyrosine-protein kinases. Isoform 3 seems to have a dominant negative role; it blocks tyrosine phosphorylation of MPZL1 induced by ConA. Isoform 1, but not isoform 2 and isoform 3, may be involved in regulation of integrin-mediated cell motility. The sequence is that of Myelin protein zero-like protein 1 (MPZL1) from Homo sapiens (Human).